A 247-amino-acid polypeptide reads, in one-letter code: tRNA (guanine-N(1)-)-methyltransferase (247 aa).

Residues Gly-112 and Ile-132–Leu-137 contribute to the S-adenosyl-L-methionine site.

Belongs to the RNA methyltransferase TrmD family. Homodimer.

The protein localises to the cytoplasm. It catalyses the reaction guanosine(37) in tRNA + S-adenosyl-L-methionine = N(1)-methylguanosine(37) in tRNA + S-adenosyl-L-homocysteine + H(+). Its function is as follows. Specifically methylates guanosine-37 in various tRNAs. This is tRNA (guanine-N(1)-)-methyltransferase from Geotalea uraniireducens (strain Rf4) (Geobacter uraniireducens).